The sequence spans 344 residues: MPITEQEALLRCIDHREIFHDEMLHLFRKIMSGEMSPVMIAALTMGLRVKKESIGEIAAAAQVMREFSTKVPLTDTTNLLDIVGTGGDGANTFNISTASMFVAASAGARIAKHGGRSVSSSSGSADVLESLGANINLKPELVAESIAQTGIGFMFAPNHHAAMKHAAPVRKELGVRTIFNILGPLTNPAGAPNILMGVFHPDLVGIQVRVLQRLGAQHAIVVWGRDNMDEVSLGAATMVGELVNGEIREYEIHPEDFGLQMIASRNLKVANSVESKAKIFEALDNVDSPARDIVALNAGTALYAAGVASSIADGLAKARAAIASGAARAKLEQFVQVTQALGKA.

5-phospho-alpha-D-ribose 1-diphosphate-binding positions include Gly-84, 87–88 (GD), Thr-92, 94–97 (NIST), 112–120 (KHGGRSVSS), and Ser-124. Residue Gly-84 coordinates anthranilate. A Mg(2+)-binding site is contributed by Ser-96. Position 170 (Arg-170) interacts with anthranilate. The Mg(2+) site is built by Asp-229 and Glu-230.

Belongs to the anthranilate phosphoribosyltransferase family. As to quaternary structure, homodimer. Mg(2+) is required as a cofactor.

It carries out the reaction N-(5-phospho-beta-D-ribosyl)anthranilate + diphosphate = 5-phospho-alpha-D-ribose 1-diphosphate + anthranilate. It participates in amino-acid biosynthesis; L-tryptophan biosynthesis; L-tryptophan from chorismate: step 2/5. Its function is as follows. Catalyzes the transfer of the phosphoribosyl group of 5-phosphorylribose-1-pyrophosphate (PRPP) to anthranilate to yield N-(5'-phosphoribosyl)-anthranilate (PRA). This is Anthranilate phosphoribosyltransferase from Janthinobacterium sp. (strain Marseille) (Minibacterium massiliensis).